A 121-amino-acid polypeptide reads, in one-letter code: Flagellar protein FliT (121 aa).

Residues 1–50 form a required for homodimerization region; that stretch reads MNHAPHLYFAWQQLVEKSQLMLRLATEEQWDELIASEMAYVNAVQEIAHL. The fliD binding stretch occupies residues 60-98; that stretch reads MQEQLRPMLRLILDNESKVKQLLQIRMDELAKLVGQSSV.

It belongs to the FliT family. In terms of assembly, homodimer. Interacts with FliD and FlhC.

It is found in the cytoplasm. The protein resides in the cytosol. Functionally, dual-function protein that regulates the transcription of class 2 flagellar operons and that also acts as an export chaperone for the filament-capping protein FliD. As a transcriptional regulator, acts as an anti-FlhDC factor; it directly binds FlhC, thus inhibiting the binding of the FlhC/FlhD complex to class 2 promoters, resulting in decreased expression of class 2 flagellar operons. As a chaperone, effects FliD transition to the membrane by preventing its premature polymerization, and by directing it to the export apparatus. This is Flagellar protein FliT from Escherichia coli (strain ATCC 8739 / DSM 1576 / NBRC 3972 / NCIMB 8545 / WDCM 00012 / Crooks).